We begin with the raw amino-acid sequence, 251 residues long: Large ribosomal subunit protein uL16m (251 aa).

A mitochondrion-targeting transit peptide spans 1 to 29; the sequence is MWRLLTRAPAPLWRMHFSDTWAALPTSAG.

The protein belongs to the universal ribosomal protein uL16 family. Component of the mitochondrial ribosome large subunit (39S) which comprises a 16S rRNA and about 50 distinct proteins.

The protein localises to the mitochondrion. This is Large ribosomal subunit protein uL16m (Mrpl16) from Rattus norvegicus (Rat).